The following is a 703-amino-acid chain: Elongation factor G 1 (703 aa).

The 283-residue stretch at 8-290 (ERYRNIGISA…AVIDFLPSPV (283 aa)) folds into the tr-type G domain. Residues 17-24 (AHIDAGKT), 88-92 (DTPGH), and 142-145 (NKMD) contribute to the GTP site.

This sequence belongs to the TRAFAC class translation factor GTPase superfamily. Classic translation factor GTPase family. EF-G/EF-2 subfamily.

Its subcellular location is the cytoplasm. Its function is as follows. Catalyzes the GTP-dependent ribosomal translocation step during translation elongation. During this step, the ribosome changes from the pre-translocational (PRE) to the post-translocational (POST) state as the newly formed A-site-bound peptidyl-tRNA and P-site-bound deacylated tRNA move to the P and E sites, respectively. Catalyzes the coordinated movement of the two tRNA molecules, the mRNA and conformational changes in the ribosome. The chain is Elongation factor G 1 from Cupriavidus metallidurans (strain ATCC 43123 / DSM 2839 / NBRC 102507 / CH34) (Ralstonia metallidurans).